We begin with the raw amino-acid sequence, 107 residues long: Nucleoid-associated protein Mlg_1509 (107 aa).

It belongs to the YbaB/EbfC family. Homodimer.

It is found in the cytoplasm. It localises to the nucleoid. In terms of biological role, binds to DNA and alters its conformation. May be involved in regulation of gene expression, nucleoid organization and DNA protection. The polypeptide is Nucleoid-associated protein Mlg_1509 (Alkalilimnicola ehrlichii (strain ATCC BAA-1101 / DSM 17681 / MLHE-1)).